The sequence spans 107 residues: UPF0060 membrane protein A1S_1909 (107 aa).

Transmembrane regions (helical) follow at residues 2 to 22 (FGLF…PYLI), 28 to 48 (SAWL…LLTL), 56 to 76 (IYAA…RFVD), and 85 to 105 (ILGG…PQGL).

It belongs to the UPF0060 family.

The protein localises to the cell inner membrane. The chain is UPF0060 membrane protein A1S_1909 from Acinetobacter baumannii (strain ATCC 17978 / DSM 105126 / CIP 53.77 / LMG 1025 / NCDC KC755 / 5377).